We begin with the raw amino-acid sequence, 216 residues long: Protein-L-isoaspartate O-methyltransferase (216 aa).

Ser-63 is a catalytic residue.

Belongs to the methyltransferase superfamily. L-isoaspartyl/D-aspartyl protein methyltransferase family.

It is found in the cytoplasm. It carries out the reaction [protein]-L-isoaspartate + S-adenosyl-L-methionine = [protein]-L-isoaspartate alpha-methyl ester + S-adenosyl-L-homocysteine. Catalyzes the methyl esterification of L-isoaspartyl residues in peptides and proteins that result from spontaneous decomposition of normal L-aspartyl and L-asparaginyl residues. It plays a role in the repair and/or degradation of damaged proteins. This Rhodopseudomonas palustris (strain BisB18) protein is Protein-L-isoaspartate O-methyltransferase.